A 267-amino-acid polypeptide reads, in one-letter code: 2-dehydro-3-deoxyphosphooctonate aldolase (267 aa).

The protein belongs to the KdsA family.

The protein resides in the cytoplasm. It catalyses the reaction D-arabinose 5-phosphate + phosphoenolpyruvate + H2O = 3-deoxy-alpha-D-manno-2-octulosonate-8-phosphate + phosphate. It participates in carbohydrate biosynthesis; 3-deoxy-D-manno-octulosonate biosynthesis; 3-deoxy-D-manno-octulosonate from D-ribulose 5-phosphate: step 2/3. The protein operates within bacterial outer membrane biogenesis; lipopolysaccharide biosynthesis. This is 2-dehydro-3-deoxyphosphooctonate aldolase from Campylobacter jejuni subsp. doylei (strain ATCC BAA-1458 / RM4099 / 269.97).